A 148-amino-acid chain; its full sequence is MTRTVLVLNGPNLNLLGTREPQTYGRRTLGEIADECAAFAETRGFAVDFRQTNQEGQLLDWIHQARGRVAGIVINPAAWTHTSVALRDALAAVELPVVEVHLSNVHQREAFRHHSYVSPVALGVICGFGSLGYRLALEHFAERFEAAA.

Residue Tyr-24 is the Proton acceptor of the active site. Substrate-binding residues include Asn-75, His-81, and Asp-88. His-101 functions as the Proton donor in the catalytic mechanism. Substrate-binding positions include 102 to 103 (LS) and Arg-112.

Belongs to the type-II 3-dehydroquinase family. As to quaternary structure, homododecamer.

It catalyses the reaction 3-dehydroquinate = 3-dehydroshikimate + H2O. The protein operates within metabolic intermediate biosynthesis; chorismate biosynthesis; chorismate from D-erythrose 4-phosphate and phosphoenolpyruvate: step 3/7. Functionally, catalyzes a trans-dehydration via an enolate intermediate. This is 3-dehydroquinate dehydratase 2 (aroQ2) from Pseudomonas aeruginosa (strain ATCC 15692 / DSM 22644 / CIP 104116 / JCM 14847 / LMG 12228 / 1C / PRS 101 / PAO1).